The chain runs to 250 residues: Snake venom serine protease pictobin (250 aa).

A signal peptide spans 1–11 (ANLLILQVSYA). The propeptide occupies 12-17 (QKSSEL). Residues 18–241 (VIGGDECNIN…HLHWILSIIA (224 aa)) form the Peptidase S1 domain. 5 disulfides stabilise this stretch: Cys24–Cys155, Cys42–Cys58, Cys134–Cys202, Cys166–Cys181, and Cys192–Cys217. Residue His57 is the Charge relay system of the active site. Asn71 and Asn95 each carry an N-linked (GlcNAc...) asparagine glycan. Asp102 acts as the Charge relay system in catalysis. N-linked (GlcNAc...) asparagine glycosylation is found at Asn146 and Asn162. Residue Ser196 is the Charge relay system of the active site. A glycan (N-linked (GlcNAc...) asparagine) is linked at Asn243.

It belongs to the peptidase S1 family. Snake venom subfamily. As to quaternary structure, monomer. As to expression, expressed by the venom gland.

It localises to the secreted. Snake venom serine protease that may impair the hemostatic system of the prey. The protein is Snake venom serine protease pictobin of Bothrops pictus (Desert lancehead).